Here is a 416-residue protein sequence, read N- to C-terminus: MFSAKDTLAKVDPELWQAIQAEVQRQEDHIELIASENYVSKAVMEAQGSQLTNKYAEGYPGKRYYGGCEYVDVAEQIAIDRLKKLFGAEAANVQPNSGSQANQAVLMAFAKPGDTIMGMSLAEGGHLTHGMALNMSGKWFNVVSYGLNEKEEIDYDKMEALAREHKPKIIVAGASAYALRIDWERFAKIAKEVGAIFWVDMAHYAGLIAAGFYPNPVPFADVVTSTTHKTLRGPRGGVILMKAEHEKALNSAIFPGLQGGPLEHVIAAKAVAFKEAATPEFKNYQEQVINNARVMARVLGEERGLRIVSGRTESHVFLLDLRAKNITGKDAEAALGRAHITVNKNGIPNDPQKPFVTSGIRIGSPAMTTRGFTEIEAEQIAHLVADVLEAPSDEAVAATVREKVSALCKKFPVYGA.

(6S)-5,6,7,8-tetrahydrofolate contacts are provided by residues Leu121 and 125 to 127; that span reads GHL. Lys229 carries the N6-(pyridoxal phosphate)lysine modification.

It belongs to the SHMT family. As to quaternary structure, homodimer. Requires pyridoxal 5'-phosphate as cofactor.

The protein localises to the cytoplasm. It carries out the reaction (6R)-5,10-methylene-5,6,7,8-tetrahydrofolate + glycine + H2O = (6S)-5,6,7,8-tetrahydrofolate + L-serine. It participates in one-carbon metabolism; tetrahydrofolate interconversion. The protein operates within amino-acid biosynthesis; glycine biosynthesis; glycine from L-serine: step 1/1. Functionally, catalyzes the reversible interconversion of serine and glycine with tetrahydrofolate (THF) serving as the one-carbon carrier. This reaction serves as the major source of one-carbon groups required for the biosynthesis of purines, thymidylate, methionine, and other important biomolecules. Also exhibits THF-independent aldolase activity toward beta-hydroxyamino acids, producing glycine and aldehydes, via a retro-aldol mechanism. In Dechloromonas aromatica (strain RCB), this protein is Serine hydroxymethyltransferase.